A 116-amino-acid chain; its full sequence is Diuretic hormone class 2 (116 aa).

The first 25 residues, 1–25 (MTNRCACFALAFLLFCLLAISSIEA), serve as a signal peptide directing secretion. Residues 26-75 (APMPSQSNGGYGGAGYNELEEVPDDLLMELMTRFGRTIIRARNDLENSKR) constitute a propeptide that is removed on maturation. Proline amide is present on P106. The propeptide occupies 112-116 (SETDV).

It is found in the secreted. Regulation of fluid secretion. Stimulates Malpighian tubules fluid secretion by activating the apical membrane V-ATPase via cyclic AMP of principal cells in the main secretory segment. The protein is Diuretic hormone class 2 (Dh31) of Drosophila melanogaster (Fruit fly).